The chain runs to 343 residues: Farnesyl pyrophosphate synthase (343 aa).

Positions 49, 52, and 87 each coordinate isopentenyl diphosphate. Mg(2+)-binding residues include aspartate 94 and aspartate 98. Arginine 103 is a dimethylallyl diphosphate binding site. Residue arginine 104 participates in isopentenyl diphosphate binding. Positions 191, 192, 230, 247, and 256 each coordinate dimethylallyl diphosphate.

This sequence belongs to the FPP/GGPP synthase family. It depends on Mg(2+) as a cofactor. In terms of tissue distribution, expressed both in apical and sub-apical cells of glandular secretory trichomes.

The protein localises to the cytoplasm. It localises to the nucleus. The enzyme catalyses isopentenyl diphosphate + dimethylallyl diphosphate = (2E)-geranyl diphosphate + diphosphate. The catalysed reaction is isopentenyl diphosphate + (2E)-geranyl diphosphate = (2E,6E)-farnesyl diphosphate + diphosphate. Its pathway is isoprenoid biosynthesis; farnesyl diphosphate biosynthesis; farnesyl diphosphate from geranyl diphosphate and isopentenyl diphosphate: step 1/1. It participates in sesquiterpene biosynthesis. It functions in the pathway isoprenoid biosynthesis; geranyl diphosphate biosynthesis; geranyl diphosphate from dimethylallyl diphosphate and isopentenyl diphosphate: step 1/1. Functionally, involved in the biosynthesis of the antimalarial endoperoxide artemisinin. Catalyzes the sequential condensation of isopentenyl pyrophosphate with the allylic pyrophosphates, dimethylallyl pyrophosphate, and then with the resultant geranylpyrophosphate to the ultimate product farnesyl pyrophosphate. Promotes anti-malarial and antimicrobial (toward Gram-positive bacteria B.subtilis and S.aureus) activities of plant crude extract probably by triggering artemisinin levels. This chain is Farnesyl pyrophosphate synthase, found in Artemisia annua (Sweet wormwood).